The chain runs to 668 residues: DNA ligase (668 aa).

Residues 37–41, 86–87, and E116 each bind NAD(+); these read DAVYD and SM. The N6-AMP-lysine intermediate role is filled by K118. NAD(+) contacts are provided by R139, E173, K288, and K312. Zn(2+)-binding residues include C406, C409, C424, and C429. The BRCT domain occupies 590–668; it reads APDNFFKEKT…EQEAIAKIEK (79 aa).

The protein belongs to the NAD-dependent DNA ligase family. LigA subfamily. The cofactor is Mg(2+). Requires Mn(2+) as cofactor.

It catalyses the reaction NAD(+) + (deoxyribonucleotide)n-3'-hydroxyl + 5'-phospho-(deoxyribonucleotide)m = (deoxyribonucleotide)n+m + AMP + beta-nicotinamide D-nucleotide.. Functionally, DNA ligase that catalyzes the formation of phosphodiester linkages between 5'-phosphoryl and 3'-hydroxyl groups in double-stranded DNA using NAD as a coenzyme and as the energy source for the reaction. It is essential for DNA replication and repair of damaged DNA. This chain is DNA ligase, found in Lactobacillus gasseri (strain ATCC 33323 / DSM 20243 / BCRC 14619 / CIP 102991 / JCM 1131 / KCTC 3163 / NCIMB 11718 / NCTC 13722 / AM63).